Here is a 720-residue protein sequence, read N- to C-terminus: Engulfment and cell motility protein 3 (720 aa).

One can recognise an ELMO domain in the interval 307–479; the sequence is EQREQLQVLR…VVREQLARTL (173 aa). One can recognise a PH domain in the interval 542 to 664; the sequence is RLCEGTLFRK…TDGLSALLGS (123 aa). Positions 696–706 match the SH3-binding motif; sequence PERPPPVPPPP.

As to quaternary structure, probably interacts directly with the SH3-domain of DOCK1 via its SH3-binding site. Part of a complex with DOCK1 and RAC1. Interacts with ADGRB3.

It is found in the cytoplasm. Involved in cytoskeletal rearrangements required for phagocytosis of apoptotic cells and cell motility. Acts in association with DOCK1 and CRK. Was initially proposed to be required in complex with DOCK1 to activate Rac Rho small GTPases. May enhance the guanine nucleotide exchange factor (GEF) activity of DOCK1. The polypeptide is Engulfment and cell motility protein 3 (ELMO3) (Homo sapiens (Human)).